We begin with the raw amino-acid sequence, 683 residues long: Pre-mRNA-splicing factor CLF1 (683 aa).

HAT repeat units lie at residues 40-72, 74-106, 108-140, 142-173, 175-206, 291-323, 336-367, 374-407, 409-440, 442-474, 476-513, 515-547, and 582-620; these read DWQR…FEYE, RDMR…CELR, RDVN…MEES, GQVE…FETR, GQVE…FERK, SILF…LLEE, ATVK…FLET, LTRS…FEIR, EKLD…LEIK, KEFD…LEEN, GDED…FETD, SEFE…YESS, and ENKE…YESI.

This sequence belongs to the crooked-neck family. In terms of assembly, associated with the spliceosome.

It localises to the nucleus. Involved in pre-mRNA splicing and cell cycle progression. Required for the spliceosome assembly and initiation of the DNA replication. The chain is Pre-mRNA-splicing factor CLF1 (CLF1) from Eremothecium gossypii (strain ATCC 10895 / CBS 109.51 / FGSC 9923 / NRRL Y-1056) (Yeast).